We begin with the raw amino-acid sequence, 388 residues long: Zinc finger protein ubi-d4 A (388 aa).

Residues 60-190 (GPGSAPGQLY…AKGKGIGSAR (131 aa)) form a disordered region. Composition is skewed to basic and acidic residues over residues 97–107 (PDPEQMLKKEG) and 123–137 (DPIE…RDDD). The segment covering 156-170 (PDDFLDDLDDEDYEE) has biased composition (acidic residues). The C2H2-type zinc finger occupies 205–228 (YACDICGKRYKNRPGLSYHYAHSH). The tract at residues 233–264 (EGAGAEDKEDSQPPTPIMHRPEEQKSKKGPDG) is disordered. Residues 251–262 (HRPEEQKSKKGP) are compositionally biased toward basic and acidic residues. 2 consecutive PHD-type zinc fingers follow at residues 269–329 (NNYC…CKCC) and 326–376 (CKCC…CLDL).

The protein belongs to the requiem/DPF family.

It is found in the cytoplasm. It localises to the nucleus. Its function is as follows. May be a transcription factor required for the apoptosis response following survival factor withdrawal from myeloid cells. Might also have a role in the development and maturation of lymphoid cells. The protein is Zinc finger protein ubi-d4 A (req-a) of Xenopus laevis (African clawed frog).